Reading from the N-terminus, the 380-residue chain is Cytochrome b (380 aa).

A run of 4 helical transmembrane segments spans residues 34–54 (FGSL…LLAT), 78–99 (WLIR…YLHI), 114–134 (WNTG…GYVL), and 179–199 (FFAL…IHLT). Heme b is bound by residues His-84 and His-98. Positions 183 and 197 each coordinate heme b. His-202 serves as a coordination point for a ubiquinone. 4 helical membrane-spanning segments follow: residues 227 to 247 (LKDI…ALFS), 289 to 309 (LGGV…PLLH), 321 to 341 (FSQF…WVGS), and 348 to 368 (FIII…LLFP).

Belongs to the cytochrome b family. As to quaternary structure, the cytochrome bc1 complex contains 11 subunits: 3 respiratory subunits (MT-CYB, CYC1 and UQCRFS1), 2 core proteins (UQCRC1 and UQCRC2) and 6 low-molecular weight proteins (UQCRH/QCR6, UQCRB/QCR7, UQCRQ/QCR8, UQCR10/QCR9, UQCR11/QCR10 and a cleavage product of UQCRFS1). This cytochrome bc1 complex then forms a dimer. Heme b serves as cofactor.

The protein localises to the mitochondrion inner membrane. In terms of biological role, component of the ubiquinol-cytochrome c reductase complex (complex III or cytochrome b-c1 complex) that is part of the mitochondrial respiratory chain. The b-c1 complex mediates electron transfer from ubiquinol to cytochrome c. Contributes to the generation of a proton gradient across the mitochondrial membrane that is then used for ATP synthesis. This chain is Cytochrome b (MT-CYB), found in Alle alle (Dovekie).